Reading from the N-terminus, the 1447-residue chain is Spike glycoprotein (1447 aa).

Positions 1–28 are cleaved as a signal peptide; it reads MKKLFVVLVVMPLIYGDNFPCSKLTNRT. 2 S1 regions span residues 17–774 and 29–774; these read DNFP…FYYY and IGNQ…FYYY. Residues 29–1388 lie on the Virion surface side of the membrane; that stretch reads IGNQWNLIET…NRIETYVKWP (1360 aa). The interval 655 to 799 is interaction with host ANPEP; sequence VIYEEGDNIV…DSNDVDCEPV (145 aa). Residues 775-1447 form an S2 region; that stretch reads SIYNYTNDRT…YEPIEKVHVH (673 aa). The segment at 1020 to 1041 is fusion peptide; that stretch reads AGGITLGALGGGAVAIPFAVAV. The tract at residues 1035 to 1154 is heptad repeat 1 (HR1); the sequence is IPFAVAVQAR…QVDRLITGRL (120 aa). 2 coiled-coil regions span residues 1102 to 1146 and 1336 to 1378; these read QDVV…DAQV and TYLN…LEWL. Residues 1303–1400 form a heptad repeat 2 (HR2) region; it reads PDYIDINQTV…VWLLIGLVVI (98 aa). A helical membrane pass occupies residues 1389-1408; the sequence is WYVWLLIGLVVIFCIPLLLF. Residues 1409–1447 lie on the Intravirion side of the membrane; it reads CCCSTGCCGCIGCLGSCCHSICSRRQFENYEPIEKVHVH. The short motif at 1443–1447 is the KxHxx element; the sequence is KVHVH.

The protein belongs to the alphacoronaviruses spike protein family. In terms of assembly, homotrimer. During virus morphogenesis, found in a complex with M and HE proteins. Interacts with host ANPEP.

Its subcellular location is the virion membrane. It is found in the host endoplasmic reticulum-Golgi intermediate compartment membrane. Its function is as follows. S1 region attaches the virion to the cell membrane by interacting with host ANPEP/aminopeptidase N, initiating the infection. Binding to the receptor probably induces conformational changes in the S glycoprotein unmasking the fusion peptide of S2 region and activating membranes fusion. S2 region belongs to the class I viral fusion protein. Under the current model, the protein has at least 3 conformational states: pre-fusion native state, pre-hairpin intermediate state, and post-fusion hairpin state. During viral and target cell membrane fusion, the coiled coil regions (heptad repeats) regions assume a trimer-of-hairpins structure, positioning the fusion peptide in close proximity to the C-terminal region of the ectodomain. The formation of this structure appears to drive apposition and subsequent fusion of viral and target cell membranes. This is Spike glycoprotein from Sus scrofa (Pig).